We begin with the raw amino-acid sequence, 189 residues long: Crossover junction endodeoxyribonuclease RuvC (189 aa).

Active-site residues include Asp-7, Glu-68, and Asp-141. Mg(2+) is bound by residues Asp-7, Glu-68, and Asp-141.

It belongs to the RuvC family. Homodimer which binds Holliday junction (HJ) DNA. The HJ becomes 2-fold symmetrical on binding to RuvC with unstacked arms; it has a different conformation from HJ DNA in complex with RuvA. In the full resolvosome a probable DNA-RuvA(4)-RuvB(12)-RuvC(2) complex forms which resolves the HJ. The cofactor is Mg(2+).

It is found in the cytoplasm. The enzyme catalyses Endonucleolytic cleavage at a junction such as a reciprocal single-stranded crossover between two homologous DNA duplexes (Holliday junction).. The RuvA-RuvB-RuvC complex processes Holliday junction (HJ) DNA during genetic recombination and DNA repair. Endonuclease that resolves HJ intermediates. Cleaves cruciform DNA by making single-stranded nicks across the HJ at symmetrical positions within the homologous arms, yielding a 5'-phosphate and a 3'-hydroxyl group; requires a central core of homology in the junction. The consensus cleavage sequence is 5'-(A/T)TT(C/G)-3'. Cleavage occurs on the 3'-side of the TT dinucleotide at the point of strand exchange. HJ branch migration catalyzed by RuvA-RuvB allows RuvC to scan DNA until it finds its consensus sequence, where it cleaves and resolves the cruciform DNA. The polypeptide is Crossover junction endodeoxyribonuclease RuvC (Rhodococcus jostii (strain RHA1)).